The chain runs to 359 residues: MSFTVHLNKILQKYQDLEADLNGGKLDNKELALISKEYSNLKPIIEKLNRYLKAHENIKYLQQVIDTEQDLELKSIAEVELYDTLNYLPKLEEEVKISLLPKESDDHKNAIIEVRAGTGGDEAALFAASLFQMYNKYAERKKWKFELLSISDTEIGGCKEASALISGNGVFANLKFESGVHRVQRIPKTESNGRIHTSAATVVVLPEAEEVDVKIDAKDLKIDTYRASGAGGQHVNTTDSAVRITHIPTGVVVSQQDEKSQHKNKAKAMKILYARLYDLEKQKSKQEQAISRKVQVGTGDRSERIRTYNYPQGRVTDHRINLTLYKIEEIIQEGKLDEIINNLISENEAKKIADSNIQF.

At Gln233 the chain carries N5-methylglutamine.

Belongs to the prokaryotic/mitochondrial release factor family. In terms of processing, methylated by PrmC. Methylation increases the termination efficiency of RF1.

Its subcellular location is the cytoplasm. Functionally, peptide chain release factor 1 directs the termination of translation in response to the peptide chain termination codons UAG and UAA. This chain is Peptide chain release factor 1, found in Orientia tsutsugamushi (strain Boryong) (Rickettsia tsutsugamushi).